Here is a 412-residue protein sequence, read N- to C-terminus: NF-kappa-B essential modulator (412 aa).

A disordered region spans residues 1-48; sequence MSRHLWKNQLSEMVQPSGGPAEDQDMLGEESSLGKPAMLHLPSEQGTP. Residues 1 to 197 are required for interaction with and ubiquitination by MARCHF2; the sequence is MSRHLWKNQL…REVLQQQHSV (197 aa). Residues Ser-31 and Ser-43 each carry the phosphoserine; by IKKB modification. The interaction with CHUK/IKBKB stretch occupies residues 44-111; the sequence is EQGTPETLQR…KLVERLSLEK (68 aa). Positions 49–343 form a coiled coil; it reads ETLQRCLEEN…NKLKVGCHES (295 aa). A Phosphoserine modification is found at Ser-68. Residue Ser-85 is modified to Phosphoserine; by ATM. Residues Lys-111, Lys-139, Lys-143, Lys-226, and Lys-246 each participate in a glycyl lysine isopeptide (Lys-Gly) (interchain with G-Cter in ubiquitin) cross-link. The interaction with TANK stretch occupies residues 150 to 250; it reads LGELQESQSR…YDSHIKSSKG (101 aa). The ubiquitin-binding (UBAN) stretch occupies residues 242-343; it reads DSHIKSSKGM…NKLKVGCHES (102 aa). Residues 246-358 are self-association; sequence KSSKGMQLED…MRKRHVETSQ (113 aa). Residues 249–412 form a required for interaction with TNFAIP3 region; that stretch reads KGMQLEDLRQ…LQIHVMECIE (164 aa). A Glycyl lysine isopeptide (Lys-Gly) (interchain with G-Cter in SUMO); alternate cross-link involves residue Lys-270. Residue Lys-270 forms a Glycyl lysine isopeptide (Lys-Gly) (interchain with G-Cter in ubiquitin); alternate linkage. Residues Lys-276, Lys-278, Lys-285, and Lys-295 each participate in a glycyl lysine isopeptide (Lys-Gly) (interchain with G-Cter in ubiquitin) cross-link. Lys-302 is covalently cross-linked (Glycyl lysine isopeptide (Lys-Gly) (interchain with G-Cter in SUMO); alternate). Lys-302 is covalently cross-linked (Glycyl lysine isopeptide (Lys-Gly) (interchain with G-Cter in ubiquitin); alternate). Glycyl lysine isopeptide (Lys-Gly) (interchain with G-Cter in ubiquitin) cross-links involve residues Lys-314 and Lys-319. A leucine-zipper region spans residues 315-336; that stretch reads LVERKELLQEQLEQLQREFNKL. Ser-369 is modified (phosphoserine; by IKKB). The tract at residues 375–412 is interaction with CYLD; it reads SNQRRSPPEEPPDFCCPKCQYQAPDMDTLQIHVMECIE. The residue at position 380 (Ser-380) is a Phosphoserine. A CCHC NOA-type zinc finger spans residues 382–412; it reads PEEPPDFCCPKCQYQAPDMDTLQIHVMECIE. Position 390 (Cys-390) interacts with Zn(2+). Lys-392 participates in a covalent cross-link: Glycyl lysine isopeptide (Lys-Gly) (interchain with G-Cter in ubiquitin). Residues Cys-393, His-406, and Cys-410 each contribute to the Zn(2+) site.

In terms of assembly, homodimer; disulfide-linked. Component of the I-kappa-B-kinase (IKK) core complex consisting of CHUK, IKBKB and IKBKG; probably four alpha/CHUK-beta/IKBKB dimers are associated with four gamma/IKBKG subunits. The IKK core complex seems to associate with regulatory or adapter proteins to form a IKK-signalosome holo-complex. The IKK complex associates with TERF2IP/RAP1, leading to promote IKK-mediated phosphorylation of RELA/p65. Part of a complex composed of NCOA2, NCOA3, CHUK/IKKA, IKBKB, IKBKG and CREBBP. Interacts with COPS3, CYLD, NALP2, TRPC4AP and PIDD1. Interacts with ATM; the complex is exported from the nucleus. Interacts with TRAF6. Interacts with IKBKE. Interacts with TANK; the interaction is enhanced by IKBKE and TBK1. Part of a ternary complex consisting of TANK, IKBKB and IKBKG. Interacts with ZFAND5. Interacts with RIPK2. Interacts with TNIP1 and TNFAIP3; TNIP1 facilitates the TNFAIP3-mediated de-ubiquitination of IKBKG. Interacts with TNFAIP3; the interaction is induced by TNF stimulation and by polyubiquitin. Binds (via UBAN region) polyubiquitin; binds both 'Lys-63'-linked and linear polyubiquitin, with higher affinity for linear ubiquitin. Interacts with NLRP10. Interacts with TANK; this interaction increases in response to DNA damage. Interacts with USP10; this interaction increases in response to DNA damage. Interacts with ZC3H12A; this interaction increases in response to DNA damage. Interacts with IFIT5; the interaction synergizes the recruitment of IKK to MAP3K7 and enhances IKK phosphorylation. Interacts with TRIM29; this interaction induces IKBKG/NEMO ubiquitination and proteolytic degradation. Interacts with TRIM13; this interaction leads to IKBKG/NEMO ubiquitination. Interacts with ARFIP2. Interacts with RIPK1. Interacts with (ubiquitinated) BCL10; interaction with polyubiquitinated BCL10 via both 'Lys-63'-linked and linear ubiquitin is required for TCR-induced NF-kappa-B activation. Interacts with MARCHF2; during the late stages of macrophage viral and bacterial infection; the interaction leads to ubiquitination and degradation of IKBKG/NEMO. Phosphorylation at Ser-68 attenuates aminoterminal homodimerization. In terms of processing, polyubiquitinated on Lys-278 via 'Lys-63'-linked ubiquitin; the ubiquitination is mediated downstream of NOD2 and RIPK2 and probably plays a role in signaling by facilitating interactions with ubiquitin domain-containing proteins and activates the NF-kappa-B pathway. Polyubiquitinated on Lys-278 and Lys-302 through 'Lys-63'-linked ubiquitin; the ubiquitination is mediated by BCL10, MALT1 and TRAF6 and probably plays a role in signaling by facilitating interactions with ubiquitin domain-containing proteins and activates the NF-kappa-B pathway. Monoubiquitinated on Lys-270 and Lys-302; promotes nuclear export. Polyubiquitinated through 'Lys-27' by TRIM23; involved in antiviral innate and inflammatory responses. Linear polyubiquitinated on Lys-111, Lys-143, Lys-226, Lys-246, Lys-270, Lys-278, Lys-285, Lys-295, Lys-302 and Lys-319; the head-to-tail polyubiquitination is mediated by the LUBAC complex and plays a key role in NF-kappa-B activation. Deubiquitinated by USP10 in a TANK-dependent and -independent manner, leading to the negative regulation of NF-kappa-B signaling upon DNA damage. Ubiquitinated at Lys-319 by MARCHF2 following bacterial and viral infection which leads to its degradation. Polyubiquitinated via 'Lys-29'-linked ubiquitin; leading to lysosomal degradation. Post-translationally, sumoylated on Lys-270 and Lys-302 with SUMO1; the modification results in phosphorylation of Ser-85 by ATM leading to a replacement of the sumoylation by mono-ubiquitination on these residues. Neddylated by TRIM40, resulting in stabilization of NFKBIA and down-regulation of NF-kappa-B activity.

The protein localises to the cytoplasm. It localises to the nucleus. Regulatory subunit of the IKK core complex which phosphorylates inhibitors of NF-kappa-B thus leading to the dissociation of the inhibitor/NF-kappa-B complex and ultimately the degradation of the inhibitor. Its binding to scaffolding polyubiquitin plays a key role in IKK activation by multiple signaling receptor pathways. Can recognize and bind both 'Lys-63'-linked and linear polyubiquitin upon cell stimulation, with a much highr affinity for linear polyubiquitin. Could be implicated in NF-kappa-B-mediated protection from cytokine toxicity. Essential for viral activation of IRF3. Involved in TLR3- and IFIH1-mediated antiviral innate response; this function requires 'Lys-27'-linked polyubiquitination. This is NF-kappa-B essential modulator (Ikbkg) from Rattus norvegicus (Rat).